Here is a 506-residue protein sequence, read N- to C-terminus: Tabersonine 6,7-epoxidase isoform 1 (506 aa).

The helical transmembrane segment at 1-21 threads the bilayer; it reads MEFVVSLFAFVVSCFILLKVA. Residues Asn173 and Asn261 are each glycosylated (N-linked (GlcNAc...) asparagine). Cys441 provides a ligand contact to heme.

It belongs to the cytochrome P450 family. Requires heme as cofactor. In terms of tissue distribution, mainly expressed in roots.

The protein localises to the endoplasmic reticulum membrane. It carries out the reaction (-)-tabersonine + reduced [NADPH--hemoprotein reductase] + O2 = lochnericine + oxidized [NADPH--hemoprotein reductase] + H2O + H(+). The protein operates within alkaloid biosynthesis. Component of the monoterpenoid indole alkaloids (MIAs, e.g. echitovenine, tabersonine, lochnericine, 19-hydroxytabersonine and horhammericine) biosynthetic pathway; MIAs are used in cancer treatment and other medical applications. Cytochrome P450 catalyzing the conversion of tabersonine to lochnericine. This Catharanthus roseus (Madagascar periwinkle) protein is Tabersonine 6,7-epoxidase isoform 1.